The sequence spans 752 residues: Photosystem I P700 chlorophyll a apoprotein A1 (752 aa).

Helical transmembrane passes span 73–96 (IFSAHFGQLAVIFLWLSGMYFHGA), 159–182 (LYCTAIGGLGMAALMLFAGWFHYH), 198–222 (MNHHLAGLLGLGCLGWAGHQIHLSL), 294–312 (TAHHHLALAVLFLAAGHMY), 349–372 (WHAQLAINLAMMGSLSIIVAHHMY), 388–414 (LSLFTHHMWIGGFCVVGAGAHASIFMV), 436–458 (AIVSHLNWVCIFLGFHSFGLYIH), and 533–551 (FMVHHIHAFTIHVTVLILV). [4Fe-4S] cluster is bound by residues cysteine 575 and cysteine 584. 2 helical membrane-spanning segments follow: residues 591–612 (HVFLGLFWMYNSLSVAIFHFSW) and 666–688 (LSAYGLIFLAAHFVWAFSLMFLF). Position 677 (histidine 677) interacts with chlorophyll a'. Methionine 685 and tyrosine 693 together coordinate chlorophyll a. Tryptophan 694 serves as a coordination point for phylloquinone. A helical membrane pass occupies residues 726 to 746 (AVGVAHYLLGGIGTTWAFFLA).

Belongs to the PsaA/PsaB family. The PsaA/B heterodimer binds the P700 chlorophyll special pair and subsequent electron acceptors. PSI consists of a core antenna complex that captures photons, and an electron transfer chain that converts photonic excitation into a charge separation. The eukaryotic PSI reaction center is composed of at least 11 subunits. Requires P700 is a chlorophyll a/chlorophyll a' dimer, A0 is one or more chlorophyll a, A1 is one or both phylloquinones and FX is a shared 4Fe-4S iron-sulfur center. as cofactor.

The protein localises to the plastid. It localises to the chloroplast thylakoid membrane. The enzyme catalyses reduced [plastocyanin] + hnu + oxidized [2Fe-2S]-[ferredoxin] = oxidized [plastocyanin] + reduced [2Fe-2S]-[ferredoxin]. PsaA and PsaB bind P700, the primary electron donor of photosystem I (PSI), as well as the electron acceptors A0, A1 and FX. PSI is a plastocyanin/cytochrome c6-ferredoxin oxidoreductase, converting photonic excitation into a charge separation, which transfers an electron from the donor P700 chlorophyll pair to the spectroscopically characterized acceptors A0, A1, FX, FA and FB in turn. Oxidized P700 is reduced on the lumenal side of the thylakoid membrane by plastocyanin or cytochrome c6. The protein is Photosystem I P700 chlorophyll a apoprotein A1 of Porphyra purpurea (Red seaweed).